Here is a 346-residue protein sequence, read N- to C-terminus: Putative F-box/kelch-repeat protein At1g27420 (346 aa).

The F-box domain maps to 9–56 (PIIPGLTDDVAELCVSKIPRSSFQITSQVCRRWRSFLRSQHFAAVRKL). 5 Kelch repeats span residues 62–109 (EFLC…VLDG), 111–167 (KIVF…EVNG), 168–215 (LLYV…AFSS), 217–257 (LYAV…VRNK), and 259–300 (YFMD…VWNN).

The polypeptide is Putative F-box/kelch-repeat protein At1g27420 (Arabidopsis thaliana (Mouse-ear cress)).